The primary structure comprises 143 residues: Nucleoside diphosphate kinase (143 aa).

ATP contacts are provided by Lys-11, Phe-59, Arg-87, Thr-93, Arg-104, and Asn-114. His-117 serves as the catalytic Pros-phosphohistidine intermediate.

The protein belongs to the NDK family. As to quaternary structure, homotetramer. Mg(2+) is required as a cofactor.

The protein localises to the cytoplasm. It carries out the reaction a 2'-deoxyribonucleoside 5'-diphosphate + ATP = a 2'-deoxyribonucleoside 5'-triphosphate + ADP. The enzyme catalyses a ribonucleoside 5'-diphosphate + ATP = a ribonucleoside 5'-triphosphate + ADP. Major role in the synthesis of nucleoside triphosphates other than ATP. The ATP gamma phosphate is transferred to the NDP beta phosphate via a ping-pong mechanism, using a phosphorylated active-site intermediate. This Clostridium perfringens (strain ATCC 13124 / DSM 756 / JCM 1290 / NCIMB 6125 / NCTC 8237 / Type A) protein is Nucleoside diphosphate kinase.